The following is a 473-amino-acid chain: M-phase inducer phosphatase 3 (473 aa).

Positions 1 to 23 (MSTELFSSTREEGSSGSGPSFRS) are disordered. An N-acetylserine modification is found at Ser2. 2 positions are modified to phosphoserine: Ser20 and Ser38. Thr48 bears the Phosphothreonine mark. 3 positions are modified to phosphoserine: Ser57, Ser61, and Ser64. Thr67 is modified (phosphothreonine). Ser122 bears the Phosphoserine; by CDK1 mark. A Phosphoserine modification is found at Ser129. Thr130 carries the phosphothreonine modification. The disordered stretch occupies residues 132–158 (NGLDRGHRKRDAMCSSSANKENDNGNL). Residues 145–158 (CSSSANKENDNGNL) are compositionally biased toward polar residues. A Phosphoserine modification is found at Ser168. Residues Ser191 and Ser198 each carry the phosphoserine; by PLK3 modification. Position 214 is a phosphoserine; by CDK1 (Ser214). A Phosphoserine; by CHEK1, CHEK2, BRSK1, MAPK14 AND MARK3 modification is found at Ser216. The Rhodanese domain maps to 321–428 (LIEKFYVIDC…FFPEYMELCE (108 aa)). Residues 334-379 (YEYLGGHIQGALNLYSQEELFNFFLKKPIVPLDTQKRIIIVFHCEF) are HIV-1 Vpr binding site. The active site involves Cys377. A Phosphoserine modification is found at Ser472.

Belongs to the MPI phosphatase family. In terms of assembly, interacts with MAPK14 and 14-3-3 proteins. When phosphorylated on Ser-129 and/or Thr-130, interacts with PLK1. Interacts with MARK3/C-TAK1. As to quaternary structure, (Microbial infection) Interacts with HIV-1 Vpr; this interaction inactivates CDC25C phosphatase activity. Post-translationally, phosphorylated by CHEK1 and MAPK14 at Ser-216. This phosphorylation creates a binding site for 14-3-3 protein and inhibits the phosphatase. Phosphorylated by PLK4. Phosphorylated by PLK1, leading to activate the phosphatase activity. Phosphorylation by PLK3 at Ser-191 promotes nuclear translocation. Ser-198 is a minor phosphorylation site. Was initially reported to be phosphorylated by PLK3 at Ser-216. However, such phosphorylation by PLK3 was not confirmed by other groups. Phosphorylation at Thr-48, Thr-67, Ser-122, Thr-130, Ser-168 and Ser-214 occurs at G2 and G2-M transition and is probably catalyzed by CDK1. Ser-168 phosphorylation levels are lower than those at the other 5 CDK1 sites. Phosphorylation by CDK1 leads to increased activity.

The protein resides in the nucleus. The enzyme catalyses O-phospho-L-tyrosyl-[protein] + H2O = L-tyrosyl-[protein] + phosphate. Functionally, functions as a dosage-dependent inducer in mitotic control. Tyrosine protein phosphatase required for progression of the cell cycle. When phosphorylated, highly effective in activating G2 cells into prophase. Directly dephosphorylates CDK1 and activates its kinase activity. This chain is M-phase inducer phosphatase 3 (CDC25C), found in Homo sapiens (Human).